Reading from the N-terminus, the 77-residue chain is Putative defensin-like protein 60 (77 aa).

Residues 1–25 form the signal peptide; sequence MKMNITKSYVILFLVVVMTNSLSNS. Intrachain disulfides connect Cys41/Cys75, Cys45/Cys68, Cys54/Cys73, and Cys58/Cys74.

It belongs to the DEFL family.

The protein resides in the secreted. This chain is Putative defensin-like protein 60, found in Arabidopsis thaliana (Mouse-ear cress).